The sequence spans 561 residues: MDPPGYNCFVDKDKMDASIQDLGPKELNCTELQELKQLARQGYWAQSHTLRGKVYQRLIRDIPCRTVTPDASVYSDIVGKIVGKHSSSSLPLPEFVDNTQVPTYCLNTRGEGAVRKILLCIANQFPDISFCPALPAVVALLLHYSIDEAECFEKACRILSCNDPTKKLIDQSFLAFESSCMTFGDLVNKYCQAAHKLMVAVSEDVLQVYSDWQRWLFGELPLNYFARVFDVFLVEGYKVLYRVALAILKFFHKVRAGQPLESDNVKQDIRMFVKDIAKTVSPEKLLEKAFAIRLFSRKEIQLLQMANEKALRQKGITVKQKSVSLSKRQFVHLAVHAENFHSEIVSVKEMRDIWSWIPERFALCQPLLLFSSLQHGYSLSRFYFQCEGHEPTLLLIKTTQKEVCGAYLSTDWSERTKFGGKLGFFGTGECFVFRLQPEVQRYEWVVIKHPELTKATSLKSSEAAGSSSLISHCSSDPADRLSPFLAARHFNLPSKTESMFMAGGNDCLIIGGGGGQALYVDGDLNRGRTGHCDTFNNQPLCSENFLIAAVEAWGFQDPDTE.

Lys36 and Arg40 together coordinate a 1,2-diacyl-sn-glycero-3-phospho-(1D-myo-inositol). In terms of domain architecture, Rab-GAP TBC spans 45–236 (AQSHTLRGKV…RVFDVFLVEG (192 aa)). A 1,2-diacyl-sn-glycero-3-phospho-(1D-myo-inositol) is bound by residues Lys238, Arg242, and 293-297 (RLFSR). Residues 343–556 (EIVSVKEMRD…IAAVEAWGFQ (214 aa)) enclose the TLDc domain. Residues Ser475 and Ser482 each carry the phosphoserine modification.

Interacts with ARF6. As to expression, expressed in brain, particularly at the level of the cortex and the hippocampus. Expressed in the inner ear in spiral ganglion cells, a collection of neurons critical for hearing and balance.

The protein localises to the cell membrane. Its subcellular location is the cytoplasm. The protein resides in the cytoplasmic vesicle membrane. It is found in the presynapse. In terms of biological role, may act as a GTPase-activating protein for Rab family protein(s). Involved in neuronal projections development, probably through a negative modulation of ARF6 function. Involved in the regulation of synaptic vesicle trafficking. The chain is TBC1 domain family member 24 (Tbc1d24) from Mus musculus (Mouse).